The primary structure comprises 191 residues: Elongation factor P 1 (191 aa).

This sequence belongs to the elongation factor P family.

The protein localises to the cytoplasm. Its pathway is protein biosynthesis; polypeptide chain elongation. In terms of biological role, involved in peptide bond synthesis. Stimulates efficient translation and peptide-bond synthesis on native or reconstituted 70S ribosomes in vitro. Probably functions indirectly by altering the affinity of the ribosome for aminoacyl-tRNA, thus increasing their reactivity as acceptors for peptidyl transferase. The protein is Elongation factor P 1 of Lactobacillus acidophilus (strain ATCC 700396 / NCK56 / N2 / NCFM).